The primary structure comprises 254 residues: Gamma-glutamyl-gamma-aminobutyrate hydrolase (254 aa).

In terms of domain architecture, Glutamine amidotransferase type-1 spans 16-250 (RNRLKGHATQ…ITACQHHIAE (235 aa)). C114 acts as the Nucleophile in catalysis. Active-site residues include H222 and E224.

This sequence belongs to the peptidase C26 family.

The enzyme catalyses 4-(gamma-L-glutamylamino)butanoate + H2O = 4-aminobutanoate + L-glutamate. The protein operates within amine and polyamine degradation; putrescine degradation; 4-aminobutanoate from putrescine: step 4/4. Functionally, involved in the breakdown of putrescine via hydrolysis of the gamma-glutamyl linkage of gamma-glutamyl-gamma-aminobutyrate. The protein is Gamma-glutamyl-gamma-aminobutyrate hydrolase (puuD) of Escherichia coli O157:H7.